The chain runs to 301 residues: Recombination-associated protein RdgC (301 aa).

This sequence belongs to the RdgC family.

The protein localises to the cytoplasm. It is found in the nucleoid. In terms of biological role, may be involved in recombination. The polypeptide is Recombination-associated protein RdgC (Xanthomonas oryzae pv. oryzae (strain MAFF 311018)).